Consider the following 249-residue polypeptide: MMISDATMMQQNYYLNNAQKASDKALENIAAVRAISGVDSANLAIADSLRSQSSTIDQGVANAYDAIGVLQIADASLTNISQSADRLNELSVKMNNAALNDSQKGMLRTEATRIQESINDSFNNATYNGKNVFQTMNFVVGSGTETTNLNPLATGGLSIDNQDSITNFMDQLGSLRSEIGSGINAITSNINASVQNSINSKAAENNLLNNDMAKNVNDFNANYLKENAAAFVAAQSNMQLQSKIANLLQ.

As to quaternary structure, interacts with FliS.

The protein resides in the secreted. In terms of biological role, might play a role in virulence. This chain is Secreted flagellin C (flaC), found in Campylobacter jejuni subsp. jejuni serotype O:6 (strain 81116 / NCTC 11828).